Reading from the N-terminus, the 365-residue chain is Mitochondrial protein C2orf69 homolog (365 aa).

The N-terminal 24 residues, 1–24 (MLGSRRLRSPALVLLLLRPLLASG), are a transit peptide targeting the mitochondrion. Positions 28–64 (SRLQTRAMNPGGGERGSPEDSHRLQRSTVPGSDPQRS) are disordered. Polar residues predominate over residues 53-64 (RSTVPGSDPQRS).

This sequence belongs to the C2orf69 family.

It is found in the mitochondrion matrix. Its function is as follows. May play a role in the respiratory chain. In Mus musculus (Mouse), this protein is Mitochondrial protein C2orf69 homolog.